A 513-amino-acid polypeptide reads, in one-letter code: Xylose import ATP-binding protein XylG (513 aa).

ABC transporter domains lie at 5 to 242 (LEMK…VGRE) and 259 to 505 (LRIE…LRSE). 37–44 (GENGSGKS) contributes to the ATP binding site.

It belongs to the ABC transporter superfamily. Xylose importer (TC 3.A.1.2.4) family. As to quaternary structure, the complex is composed of two ATP-binding proteins (XylG), two transmembrane proteins (XylH) and a solute-binding protein (XylF).

It is found in the cell inner membrane. The catalysed reaction is D-xylose(out) + ATP + H2O = D-xylose(in) + ADP + phosphate + H(+). Its function is as follows. Part of the ABC transporter complex XylFGH involved in xylose import. Responsible for energy coupling to the transport system. The XylFGH system can also transport ribose in absence of xylose. The sequence is that of Xylose import ATP-binding protein XylG from Escherichia coli (strain K12).